The chain runs to 656 residues: NADH-ubiquinone oxidoreductase chain 5 (656 aa).

The next 17 helical transmembrane spans lie at 4–21, 28–50, 81–103, 112–129, 133–155, 176–198, 208–230, 243–262, 272–294, 301–319, 329–351, 364–386, 409–431, 452–471, 514–536, 603–625, and 629–651; these read TLIILPLLGSIVSGFFGR, AHLITCVSVITTTFLAILAFFEV, LTVSMFITVLIVSSLVHIYSISY, RFFSYLSLFTFMMIILVT, YLIMFVGWEGVGVCSYLLVNFWF, TLLTVGMFAILWSFGNIDYSTVF, IITIIGICLLIGATAKSSQVGLH, VSALIHAATMVTAGVYLLMR, TVLVLCLWLGAITTVFSSLIGLF, VIAYSTMSQLGMMVIAVGL, LVNHAFYKALLFLGAGSVIHAVA, EFLPLTYSVMLIASLSLVAVPFM, IVYFVATIGAMFTTLYSAKVLYL, LFMTIPLIILAIFSIFFGYL, FVFTVSLSLLSVLLSEFLPKLLI, SLGNLSTGIVTTYALYILIGLIF, and LLYFSYNDNNLLILIIFTLFALL.

The protein belongs to the complex I subunit 5 family.

It is found in the mitochondrion inner membrane. The catalysed reaction is a ubiquinone + NADH + 5 H(+)(in) = a ubiquinol + NAD(+) + 4 H(+)(out). Core subunit of the mitochondrial membrane respiratory chain NADH dehydrogenase (Complex I) that is believed to belong to the minimal assembly required for catalysis. Complex I functions in the transfer of electrons from NADH to the respiratory chain. The immediate electron acceptor for the enzyme is believed to be ubiquinone. This is NADH-ubiquinone oxidoreductase chain 5 (nad5) from Aspergillus niger.